A 246-amino-acid chain; its full sequence is Uridylate kinase (246 aa).

ATP is bound at residue 16–19; that stretch reads KLGG. G57 is a binding site for UMP. Positions 58 and 62 each coordinate ATP. UMP-binding positions include D77 and 138–145; that span reads MGMPYFST. Positions 171 and 174 each coordinate ATP.

It belongs to the UMP kinase family. Homohexamer.

Its subcellular location is the cytoplasm. It carries out the reaction UMP + ATP = UDP + ADP. It functions in the pathway pyrimidine metabolism; CTP biosynthesis via de novo pathway; UDP from UMP (UMPK route): step 1/1. Its activity is regulated as follows. Inhibited by UTP. Catalyzes the reversible phosphorylation of UMP to UDP. This is Uridylate kinase from Corynebacterium jeikeium (strain K411).